The sequence spans 1183 residues: DNA-directed RNA polymerase subunit beta (1183 aa).

The interval 1155–1183 (ADVDEDDVNEHKVNIQQSSIPESQKETTD) is disordered.

It belongs to the RNA polymerase beta chain family. The RNAP catalytic core consists of 2 alpha, 1 beta, 1 beta' and 1 omega subunit. When a sigma factor is associated with the core the holoenzyme is formed, which can initiate transcription.

The enzyme catalyses RNA(n) + a ribonucleoside 5'-triphosphate = RNA(n+1) + diphosphate. DNA-dependent RNA polymerase catalyzes the transcription of DNA into RNA using the four ribonucleoside triphosphates as substrates. The polypeptide is DNA-directed RNA polymerase subunit beta (Staphylococcus carnosus (strain TM300)).